Reading from the N-terminus, the 314-residue chain is Ribosomal RNA small subunit methyltransferase H (314 aa).

Residues 36–38 (GGH), Asp56, Phe80, Asp102, and Gln109 each bind S-adenosyl-L-methionine. The disordered stretch occupies residues 278 to 300 (GGRSLKSIGKMKPSEEEVADNPR). Residues 289–300 (KPSEEEVADNPR) show a composition bias toward basic and acidic residues.

Belongs to the methyltransferase superfamily. RsmH family.

Its subcellular location is the cytoplasm. The catalysed reaction is cytidine(1402) in 16S rRNA + S-adenosyl-L-methionine = N(4)-methylcytidine(1402) in 16S rRNA + S-adenosyl-L-homocysteine + H(+). Specifically methylates the N4 position of cytidine in position 1402 (C1402) of 16S rRNA. This Photorhabdus laumondii subsp. laumondii (strain DSM 15139 / CIP 105565 / TT01) (Photorhabdus luminescens subsp. laumondii) protein is Ribosomal RNA small subunit methyltransferase H.